The chain runs to 66 residues: Protein translocase subunit SecE (66 aa).

The helical transmembrane segment at 29–49 (LVASTLVVVVAVFIFSPICLV) threads the bilayer.

The protein belongs to the SecE/SEC61-gamma family. Component of the Sec protein translocase complex. Heterotrimer consisting of SecY, SecE and SecG subunits. The heterotrimers can form oligomers, although 1 heterotrimer is thought to be able to translocate proteins. Interacts with the ribosome. Interacts with SecDF, and other proteins may be involved. Interacts with SecA.

It is found in the cell inner membrane. Functionally, essential subunit of the Sec protein translocation channel SecYEG. Clamps together the 2 halves of SecY. May contact the channel plug during translocation. The sequence is that of Protein translocase subunit SecE from Rickettsia montanensis.